The sequence spans 381 residues: Creatine kinase B-type (381 aa).

Serine 4 carries the post-translational modification Phosphoserine. The Phosphagen kinase N-terminal domain occupies 11–98 (KLRFPAEDEF…FDPIIEDRHG (88 aa)). Threonine 35 bears the Phosphothreonine mark. Residue lysine 45 forms a Glycyl lysine isopeptide (Lys-Gly) (interchain with G-Cter in ubiquitin) linkage. Valine 72 contacts creatine. Positions 96-110 (RHGGYKPSDEHKTDL) are enriched in basic and acidic residues. The disordered stretch occupies residues 96–123 (RHGGYKPSDEHKTDLNPDNLQGGDDLDP). Residues lysine 101 and lysine 107 each participate in a glycyl lysine isopeptide (Lys-Gly) (interchain with G-Cter in ubiquitin) cross-link. Residue tyrosine 125 is modified to Phosphotyrosine. Residues 125–367 (YVLSSRVRTG…KLLIEMEQRL (243 aa)) form the Phosphagen kinase C-terminal domain. Residues 128-132 (SSRVR), arginine 130, arginine 132, and histidine 191 contribute to the ATP site. The tract at residues 130 to 138 (RVRTGRSIR) is internal MTS-like signal. Serine 199 carries the post-translational modification Phosphoserine. Glutamate 232 contacts creatine. Residue arginine 236 participates in ATP binding. Tyrosine 269 is modified (3'-nitrotyrosine). Residue serine 285 participates in creatine binding. Residues arginine 292, arginine 320, 320–325 (RGTGGV), and aspartate 335 contribute to the ATP site. Threonine 322 bears the Phosphothreonine mark. Lysine 381 participates in a covalent cross-link: Glycyl lysine isopeptide (Lys-Gly) (interchain with G-Cter in ubiquitin).

This sequence belongs to the ATP:guanido phosphotransferase family. In terms of assembly, dimer of identical or non-identical chains, which can be either B (brain type) or M (muscle type). With MM being the major form in skeletal muscle and myocardium, MB existing in myocardium, and BB existing in many tissues, especially brain. Interacts with SLC12A6 (via C-terminus); the interaction may be required for SLC12A6 potassium-chloride cotransport activity. Ubiquitinated by the ECS(ASB9) complex, leading to its degradation by the proteasome.

It localises to the cytoplasm. The protein localises to the cytosol. It is found in the mitochondrion. Its subcellular location is the cell membrane. It catalyses the reaction creatine + ATP = N-phosphocreatine + ADP + H(+). Reversibly catalyzes the transfer of phosphate between ATP and various phosphogens (e.g. creatine phosphate). Creatine kinase isoenzymes play a central role in energy transduction in tissues with large, fluctuating energy demands, such as skeletal muscle, heart, brain and spermatozoa. Acts as a key regulator of adaptive thermogenesis as part of the futile creatine cycle: localizes to the mitochondria of thermogenic fat cells and acts by mediating phosphorylation of creatine to initiate a futile cycle of creatine phosphorylation and dephosphorylation. During the futile creatine cycle, creatine and N-phosphocreatine are in a futile cycle, which dissipates the high energy charge of N-phosphocreatine as heat without performing any mechanical or chemical work. This Canis lupus familiaris (Dog) protein is Creatine kinase B-type (CKB).